We begin with the raw amino-acid sequence, 888 residues long: Alanine--tRNA ligase (888 aa).

Positions 570, 574, 673, and 677 each coordinate Zn(2+).

It belongs to the class-II aminoacyl-tRNA synthetase family. Requires Zn(2+) as cofactor.

The protein localises to the cytoplasm. The catalysed reaction is tRNA(Ala) + L-alanine + ATP = L-alanyl-tRNA(Ala) + AMP + diphosphate. Catalyzes the attachment of alanine to tRNA(Ala) in a two-step reaction: alanine is first activated by ATP to form Ala-AMP and then transferred to the acceptor end of tRNA(Ala). Also edits incorrectly charged Ser-tRNA(Ala) and Gly-tRNA(Ala) via its editing domain. The protein is Alanine--tRNA ligase of Chlorobium phaeobacteroides (strain DSM 266 / SMG 266 / 2430).